A 184-amino-acid chain; its full sequence is ADP-ribosylation factor-like protein 2 (184 aa).

Gly-2 carries N-myristoyl glycine lipidation. Residues 23–30 (GLDNAGKT), 66–70 (DVGGQ), Gly-68, and 125–128 (NKSD) each bind GTP.

The protein belongs to the small GTPase superfamily. Arf family. In the embryo, strongly expressed in migrating hypodermal cells. Shortly before the beginning of elongation, expressed in many developing neurons where it persists throughout adulthood. In the larva, highly expressed in migrating hypodermal cells and the uterus. Also expressed in vulva, spermatheca, sheath cells, distal tips cells and proctoderm of the male tail.

The protein resides in the cytoplasm. Its subcellular location is the cell membrane. It is found in the cytoskeleton. The protein localises to the microtubule organizing center. It localises to the centrosome. GTP-binding protein that functions in embryogenesis, cytokinesis, germline development and microtubulule cytoskeleton dynamics. The chain is ADP-ribosylation factor-like protein 2 (evl-20) from Caenorhabditis elegans.